Reading from the N-terminus, the 284-residue chain is Peflin (284 aa).

The segment at Met1–Ala111 is disordered. A compositionally biased stretch (low complexity) spans Gln8–Tyr26. 9 consecutive repeat copies span residues Pro21–Pro29, Asn31–Gly39, Pro41–Pro49, Ala50–Pro58, Ala59–Pro67, Thr76–Ala84, Ala85–Gln92, Pro93–Ala100, and Gln101–Gly109. The segment at Pro21–Gly109 is 9 X 9 AA approximate tandem repeat of [AP]-P-G-G-P-Y-G-G-P-P. The segment covering Gly34–Ala50 has biased composition (gly residues). Residues Gly65–Gly75 show a composition bias toward low complexity. A compositionally biased stretch (gly residues) spans Thr76–Tyr90. EF-hand domains are found at residues Asn114–Ser149, Thr155–Ile183, Lys181–Asn216, Leu217–Leu253, and Thr254–Met283. Asp127, Asp129, Ser131, and Tyr133 together coordinate Ca(2+). A Glycyl lysine isopeptide (Lys-Gly) (interchain with G-Cter in ubiquitin) cross-link involves residue Lys137. Glu138 serves as a coordination point for Ca(2+). Ca(2+)-binding residues include Asp194, Asp196, Ser198, Ser200, and Glu205. The required for interaction with PDCD6 stretch occupies residues Thr204–Leu284.

As to quaternary structure, heterodimer; heterodimerizes (via the EF-hand 5) with PDCD6. Dissociates from PDCD6 in presence of calcium. Post-translationally, ubiquitinated by the BCR(KLHL12) E3 ubiquitin ligase complex.

The protein resides in the cytoplasm. It localises to the endoplasmic reticulum. Its subcellular location is the membrane. It is found in the cytoplasmic vesicle. The protein localises to the COPII-coated vesicle membrane. Calcium-binding protein that acts as an adapter that bridges unrelated proteins or stabilizes weak protein-protein complexes in response to calcium. Together with PDCD6, acts as a calcium-dependent adapter for the BCR(KLHL12) complex, a complex involved in endoplasmic reticulum (ER)-Golgi transport by regulating the size of COPII coats. In response to cytosolic calcium increase, the heterodimer formed with PDCD6 interacts with, and bridges together the BCR(KLHL12) complex and SEC31 (SEC31A or SEC31B), promoting monoubiquitination of SEC31 and subsequent collagen export, which is required for neural crest specification. Its role in the heterodimer formed with PDCD6 is however unclear: some evidence shows that PEF1 and PDCD6 work together and promote association between PDCD6 and SEC31 in presence of calcium. Other reports show that PEF1 dissociates from PDCD6 in presence of calcium, and may act as a negative regulator of PDCD6. Also acts as a negative regulator of ER-Golgi transport; possibly by inhibiting interaction between PDCD6 and SEC31. In Homo sapiens (Human), this protein is Peflin.